Reading from the N-terminus, the 302-residue chain is Probable lipid kinase YegS-like (302 aa).

The DAGKc domain occupies 1–129; the sequence is MDKDKVLLVL…IDLGAVNGKL (129 aa). ATP contacts are provided by residues T39, 65–71, and T92; that span reads GDGTLRE. R210, D213, and L215 together coordinate Mg(2+). E268 functions as the Proton acceptor in the catalytic mechanism.

The protein belongs to the diacylglycerol/lipid kinase family. YegS lipid kinase subfamily. Mg(2+) is required as a cofactor. The cofactor is Ca(2+).

The protein localises to the cytoplasm. Probably phosphorylates lipids; the in vivo substrate is unknown. The sequence is that of Probable lipid kinase YegS-like from Pseudomonas aeruginosa (strain UCBPP-PA14).